Reading from the N-terminus, the 506-residue chain is Maturase K (506 aa).

The protein belongs to the intron maturase 2 family. MatK subfamily.

It localises to the plastid. The protein localises to the chloroplast. Usually encoded in the trnK tRNA gene intron. Probably assists in splicing its own and other chloroplast group II introns. The protein is Maturase K of Lathyrus sativus (White vetchling).